The sequence spans 753 residues: Catalase-peroxidase (753 aa).

Positions 90–238 (WHSAGTYRVT…LASSHMGLIY (149 aa)) form a cross-link, tryptophyl-tyrosyl-methioninium (Trp-Tyr) (with M-264). The Proton acceptor role is filled by His-91. The segment at 196 to 220 (SEGQEGHEGHGVVQGDESKKQHTDI) is disordered. Residues 238–264 (YVNPEGPDGIPDPVASAKDIRVTFGRM) constitute a cross-link (tryptophyl-tyrosyl-methioninium (Tyr-Met) (with W-90)). Residue His-279 coordinates heme b.

This sequence belongs to the peroxidase family. Peroxidase/catalase subfamily. Homodimer or homotetramer. It depends on heme b as a cofactor. Formation of the three residue Trp-Tyr-Met cross-link is important for the catalase, but not the peroxidase activity of the enzyme.

It localises to the cytoplasm. It carries out the reaction H2O2 + AH2 = A + 2 H2O. It catalyses the reaction 2 H2O2 = O2 + 2 H2O. Its activity is regulated as follows. Inhibited by KCN. In terms of biological role, bifunctional enzyme with both catalase and broad-spectrum peroxidase activity. In Neurospora crassa (strain ATCC 24698 / 74-OR23-1A / CBS 708.71 / DSM 1257 / FGSC 987), this protein is Catalase-peroxidase.